The sequence spans 408 residues: Echinulin prenyltransferase 2 (408 aa).

10 residues coordinate dimethylallyl diphosphate: arginine 94, lysine 181, tyrosine 183, arginine 248, lysine 250, tyrosine 252, glutamine 334, tyrosine 336, tyrosine 400, and tyrosine 404.

Belongs to the tryptophan dimethylallyltransferase family.

It carries out the reaction preechinulin + dimethylallyl diphosphate = tardioxopiperazine B + diphosphate. The enzyme catalyses preechinulin + dimethylallyl diphosphate = tardioxopiperazine A + diphosphate. It catalyses the reaction tardioxopiperazine A + dimethylallyl diphosphate = echinulin + diphosphate. The catalysed reaction is tardioxopiperazine A + dimethylallyl diphosphate = variecolorin L + diphosphate. It carries out the reaction neoechinulin A + dimethylallyl diphosphate = variecolorin G + diphosphate. The enzyme catalyses neoechinulin A + dimethylallyl diphosphate = isoechinulin A + diphosphate. It catalyses the reaction isoechinulin A + dimethylallyl diphosphate = dehydroechinulin + diphosphate. The catalysed reaction is neoechinulin B + dimethylallyl diphosphate = isoechinulin B + diphosphate. The protein operates within secondary metabolite biosynthesis. It functions in the pathway alkaloid biosynthesis. Functionally, prenyltransferase; part of the gene cluster that mediates the biosynthesis of echinulin family alkaloid. The pathway begins with the biosynthesis of the cyclic dipeptide cyclo-L-Trp-L-Ala (cyclo-TA) by the NRPS echPS via condensation of L-alanine and L-tryptophan. The prenyltransferase echPT1 then catalyzes the first prenylation step, a reverse prenylation reaction at C2, to yield preechinulin. Preechinulin is the substrate of the cytochrome P450 monooxygenase echP450 that catalyzes the formation of the double bond between C10 and C11 to produce neoechulin A. The unique prenyltransferase echPT2 functions as a competitive enzyme with echP450 for preechinulin metabolization and uses preechinulin for effective regiospecific prenylations. Preechinulin is prenylated by echPT2 at C5 or C7. C7-prenylation leads to accumulation of tardioxopiperazine B without further modification by echPT2. In contrast, the C5-prenylated tardioxopiperazine A can be prenylated again by echPT2, predominantly at C7 to form echinulin or less frequently at C4 to give variecolorin L. EchPT2 also accepts neoechilunin A to produce varlecolorin G (prenylation at C5) or isoechinulin A (prenylation at C7). EchPT2 further converts isoechinulin A into dehydroechinulin. Moreover, a yet unidentified enzyme can also convert neoechilunin A into neoechilunin B by introducing a double bond between positions C14 and C17 and thus provides a further substrate to echPT2 for C5 and C7 prenylation. This is Echinulin prenyltransferase 2 from Aspergillus ruber (Eurotium rubrum).